The following is a 538-amino-acid chain: CTP synthase (538 aa).

Residues 1–266 form an amidoligase domain region; it reads MRTKYIFITG…DQKIVDLLNI (266 aa). Serine 14 provides a ligand contact to CTP. Serine 14 contacts UTP. ATP-binding positions include 15–20 and aspartate 72; that span reads SLGKGL. Mg(2+)-binding residues include aspartate 72 and glutamate 140. CTP-binding positions include 147–149, 187–192, and lysine 223; these read DIE and KTKPTQ. UTP-binding positions include 187-192 and lysine 223; that span reads KTKPTQ. 239 to 241 is an ATP binding site; that stretch reads KDV. The region spanning 291-533 is the Glutamine amidotransferase type-1 domain; it reads NIAIVGKYVN…IEAALRYRKK (243 aa). Glycine 353 serves as a coordination point for L-glutamine. Catalysis depends on cysteine 380, which acts as the Nucleophile; for glutamine hydrolysis. L-glutamine contacts are provided by residues 381-384, glutamate 404, and arginine 461; that span reads LGMQ. Residues histidine 506 and glutamate 508 contribute to the active site.

Belongs to the CTP synthase family. Homotetramer.

The enzyme catalyses UTP + L-glutamine + ATP + H2O = CTP + L-glutamate + ADP + phosphate + 2 H(+). It carries out the reaction L-glutamine + H2O = L-glutamate + NH4(+). The catalysed reaction is UTP + NH4(+) + ATP = CTP + ADP + phosphate + 2 H(+). It functions in the pathway pyrimidine metabolism; CTP biosynthesis via de novo pathway; CTP from UDP: step 2/2. With respect to regulation, allosterically activated by GTP, when glutamine is the substrate; GTP has no effect on the reaction when ammonia is the substrate. The allosteric effector GTP functions by stabilizing the protein conformation that binds the tetrahedral intermediate(s) formed during glutamine hydrolysis. Inhibited by the product CTP, via allosteric rather than competitive inhibition. Functionally, catalyzes the ATP-dependent amination of UTP to CTP with either L-glutamine or ammonia as the source of nitrogen. Regulates intracellular CTP levels through interactions with the four ribonucleotide triphosphates. This Syntrophus aciditrophicus (strain SB) protein is CTP synthase.